A 256-amino-acid chain; its full sequence is MSSSRQFLSSALRQCRAAGQRTAQFSTTSPAAAIRDIPTTSFQNAPRTNTNTSSPSSNNNNNAGSSQYKSDMFNLLNSGAGSRGGRDSYNNARDVDGGQRYGSNSQKVQELLQSEVTSNNYMRMMRRRWNNGDVYAPRDLSPYEMKGRNGGWVEAADVVDELGFSPLDNYRNFSLISDYITPFGRIRHSKETGLKPVNQRKIAKMVRRAIGLGIHPSVHKHPEILKNSNGRHLLPLVVPKGQKANKTKNFDGEDEN.

Positions 19 to 106 are disordered; it reads GQRTAQFSTT…GGQRYGSNSQ (88 aa). Residues 21 to 30 show a composition bias toward polar residues; that stretch reads RTAQFSTTSP. A compositionally biased stretch (low complexity) spans 44-66; it reads NAPRTNTNTSSPSSNNNNNAGSS.

It belongs to the bacterial ribosomal protein bS18 family. In terms of assembly, component of the mitochondrial small ribosomal subunit (mt-SSU). Mature N.crassa 74S mitochondrial ribosomes consist of a small (37S) and a large (54S) subunit. The 37S small subunit contains a 16S ribosomal RNA (16S mt-rRNA) and 32 different proteins. The 54S large subunit contains a 23S rRNA (23S mt-rRNA) and 42 different proteins.

Its subcellular location is the mitochondrion. Component of the mitochondrial ribosome (mitoribosome), a dedicated translation machinery responsible for the synthesis of mitochondrial genome-encoded proteins, including at least some of the essential transmembrane subunits of the mitochondrial respiratory chain. The mitoribosomes are attached to the mitochondrial inner membrane and translation products are cotranslationally integrated into the membrane. The chain is Small ribosomal subunit protein bS18m (rsm18) from Neurospora crassa (strain ATCC 24698 / 74-OR23-1A / CBS 708.71 / DSM 1257 / FGSC 987).